The sequence spans 163 residues: Nucleotide-binding protein GWCH70_0711 (163 aa).

This sequence belongs to the YajQ family.

Nucleotide-binding protein. This is Nucleotide-binding protein GWCH70_0711 from Geobacillus sp. (strain WCH70).